The following is a 213-amino-acid chain: Ethylene-responsive transcription factor WIN1 (213 aa).

Positions 15-72 (KFRGVRQRHWGSWVSEIRHPLLKRRVWLGTFETAEEAARAYDEAAVLMSGRNAKTNFP) form a DNA-binding region, AP2/ERF. Residues 70–80 (NFPIQRSSTGE) are compositionally biased toward polar residues. Disordered stretches follow at residues 70-99 (NFPI…GSST) and 159-213 (ASTD…RFII). Positions 159-174 (ASTDAASQSTSATTAP) are enriched in low complexity.

Belongs to the AP2/ERF transcription factor family. ERF subfamily. Mostly expressed in roots, stems and anthers, and, to a lower extent, in leaves, seeds and silks.

The protein resides in the nucleus. Promotes cuticle formation by inducing the expression of enzymes involved in wax biosynthesis, particularly promoting very-long-chain waxes formation. Confers drought resistance. Acts as a transcriptional activator binding directly to promoter regions of CER2, CER3.2 and KCS1, wax biosynthesis-related genes. Binds to the GCC-box pathogenesis-related promoter element. May be involved in the regulation of gene expression by stress factors and by components of stress signal transduction pathways. This chain is Ethylene-responsive transcription factor WIN1, found in Zea mays (Maize).